A 451-amino-acid chain; its full sequence is Methionine aminopeptidase 2-2 (451 aa).

Residues 1–97 are disordered; the sequence is MAAQVEDDVA…PRVLISDLFP (97 aa). The segment covering 19–28 has biased composition (polar residues); that stretch reads TKPTNGTSQP. Residues 35 to 45 are compositionally biased toward acidic residues; that stretch reads EAEDSDDDAEG. The span at 60–73 shows a compositional bias: basic residues; sequence KKKKKRKPRKKKKA. The segment covering 74 to 83 has biased composition (low complexity); the sequence is GTSATAGAKS. His204 lines the substrate pocket. A divalent metal cation is bound by residues Asp224, Asp235, and His304. His312 is a substrate binding site. A divalent metal cation contacts are provided by Glu337 and Glu432.

It belongs to the peptidase M24A family. Methionine aminopeptidase eukaryotic type 2 subfamily. It depends on Co(2+) as a cofactor. Zn(2+) is required as a cofactor. The cofactor is Mn(2+). Fe(2+) serves as cofactor.

It is found in the cytoplasm. The enzyme catalyses Release of N-terminal amino acids, preferentially methionine, from peptides and arylamides.. Its function is as follows. Cotranslationally removes the N-terminal methionine from nascent proteins. The N-terminal methionine is often cleaved when the second residue in the primary sequence is small and uncharged (Met-Ala-, Cys, Gly, Pro, Ser, Thr, or Val). The protein is Methionine aminopeptidase 2-2 of Leptosphaeria maculans (strain JN3 / isolate v23.1.3 / race Av1-4-5-6-7-8) (Blackleg fungus).